The chain runs to 321 residues: Inner membrane protein YtfF (321 aa).

Residues 1-4 lie on the Cytoplasmic side of the membrane; it reads MISG. Residues 5-25 traverse the membrane as a helical segment; the sequence is VLYALLAGLMWGLIFVGPLIV. The region spanning 13 to 141 is the EamA domain; that stretch reads LMWGLIFVGP…IGIGLACVNI (129 aa). The Periplasmic portion of the chain corresponds to 26-30; that stretch reads PEYPA. The helical transmembrane segment at 31 to 51 threads the bilayer; it reads MLQSMGRYLALGLIALPIAWL. At 52–65 the chain is on the cytoplasmic side; the sequence is GRVRLRQLARRDWL. The chain crosses the membrane as a helical span at residues 66 to 86; the sequence is TALMLTMMGNLIYYFCLASAI. Topologically, residues 87–92 are periplasmic; it reads QRTGAP. The helical transmembrane segment at 93–113 threads the bilayer; sequence VSTMIIGTLPVVIPVFANLLY. Residues 114–120 are Cytoplasmic-facing; it reads SQRDGKL. Residues 121 to 141 form a helical membrane-spanning segment; it reads AWGKLAPALICIGIGLACVNI. Over 142–154 the chain is Periplasmic; that stretch reads AELNHGLPDFDWA. Residues 155-175 traverse the membrane as a helical segment; it reads RYTSGIVLALVSVVCWAWYAL. Topologically, residues 176–194 are cytoplasmic; the sequence is RNARWLRENPDKHPMMWAT. The chain crosses the membrane as a helical span at residues 195–215; that stretch reads AQALVTLPVSLIGYLVACYWL. Over 216-230 the chain is Periplasmic; sequence NTQTPDFSLPFGPRP. A helical transmembrane segment spans residues 231-251; sequence LVFISLMVAIAVLCSWVGALC. Residues 252–261 are Cytoplasmic-facing; sequence WNVASQLLPT. The chain crosses the membrane as a helical span at residues 262-282; that stretch reads VILGPLIVFETLAGLLYTFLL. Residues 283–285 are Periplasmic-facing; sequence RQQ. Residues 286 to 306 traverse the membrane as a helical segment; that stretch reads MPPLMTLSGIALLVIGVVIAV. The Cytoplasmic segment spans residues 307–321; it reads RAKPEKPLTESVSES.

It localises to the cell inner membrane. This is Inner membrane protein YtfF (ytfF) from Escherichia coli (strain K12).